Here is a 154-residue protein sequence, read N- to C-terminus: SsrA-binding protein (154 aa).

It belongs to the SmpB family.

Its subcellular location is the cytoplasm. Its function is as follows. Required for rescue of stalled ribosomes mediated by trans-translation. Binds to transfer-messenger RNA (tmRNA), required for stable association of tmRNA with ribosomes. tmRNA and SmpB together mimic tRNA shape, replacing the anticodon stem-loop with SmpB. tmRNA is encoded by the ssrA gene; the 2 termini fold to resemble tRNA(Ala) and it encodes a 'tag peptide', a short internal open reading frame. During trans-translation Ala-aminoacylated tmRNA acts like a tRNA, entering the A-site of stalled ribosomes, displacing the stalled mRNA. The ribosome then switches to translate the ORF on the tmRNA; the nascent peptide is terminated with the 'tag peptide' encoded by the tmRNA and targeted for degradation. The ribosome is freed to recommence translation, which seems to be the essential function of trans-translation. The chain is SsrA-binding protein from Lachnoclostridium phytofermentans (strain ATCC 700394 / DSM 18823 / ISDg) (Clostridium phytofermentans).